A 215-amino-acid polypeptide reads, in one-letter code: FGFR1 oncogene partner 2 homolog (215 aa).

Residues 35–183 (LLNKRVEAMK…SGLRELLGIS (149 aa)) adopt a coiled-coil conformation.

The protein belongs to the SIKE family.

The protein localises to the cytoplasm. The protein is FGFR1 oncogene partner 2 homolog (fgfr1op2) of Danio rerio (Zebrafish).